We begin with the raw amino-acid sequence, 321 residues long: Cathepsin O (321 aa).

The first 23 residues, 1 to 23, serve as a signal peptide directing secretion; that stretch reads MDVRALPWLPWLLWLLCRGGGDA. The propeptide at 24–107 is activation peptide; that stretch reads DSRAPFTPTW…EVHMSIPNVS (84 aa). N-linked (GlcNAc...) asparagine glycosylation is found at N62 and N105. 3 cysteine pairs are disulfide-bonded: C129/C170, C163/C204, and C262/C310. The active site involves C132. Residues H269 and N289 contribute to the active site.

The protein belongs to the peptidase C1 family. As to expression, expressed in all tissues examined. High levels seen in the ovary, kidney and placenta while low levels seen in thymus and skeletal muscle.

Its subcellular location is the lysosome. It carries out the reaction The recombinant human enzyme hydrolyzes synthetic endopeptidase substrates including Z-Phe-Arg-NHMec and Z-Arg-Arg-NHMec.. Its function is as follows. Proteolytic enzyme possibly involved in normal cellular protein degradation and turnover. The sequence is that of Cathepsin O (CTSO) from Homo sapiens (Human).